The primary structure comprises 373 residues: Flagellar P-ring protein (373 aa).

A signal peptide spans 1-30 (MTNRWSFDVKKNLVTLILTWLCLSISTAQA).

It belongs to the FlgI family. In terms of assembly, the basal body constitutes a major portion of the flagellar organelle and consists of four rings (L,P,S, and M) mounted on a central rod.

The protein resides in the periplasm. It localises to the bacterial flagellum basal body. In terms of biological role, assembles around the rod to form the L-ring and probably protects the motor/basal body from shearing forces during rotation. The polypeptide is Flagellar P-ring protein (Aliivibrio salmonicida (strain LFI1238) (Vibrio salmonicida (strain LFI1238))).